A 352-amino-acid polypeptide reads, in one-letter code: Dysbindin (352 aa).

Position 11 is a phosphoserine (Ser-11). Positions 88–176 (EKKRTSLNEL…EAFKAELDTE (89 aa)) form a coiled coil. The dysbindin stretch occupies residues 173-325 (LDTEHTQKAL…DEEEVQVDTA (153 aa)). Positions 243–256 (LMDISDQEALDVFL) match the Nuclear export signal motif. The interval 267–352 (SPGVEMESNP…SDQCDSTQDI (86 aa)) is disordered. Over residues 274 to 285 (SNPNQNEMSLQI) the composition is skewed to polar residues. The span at 286–301 (PSPSESASQPPASPSA) shows a compositional bias: low complexity. Residues Ser-315, Ser-340, and Ser-343 each carry the phosphoserine modification.

This sequence belongs to the dysbindin family. In terms of assembly, interacts with AP3M1 and TRIM32. Interacts (isoform 1 and isoform 2 only) with the DNA-dependent protein kinase complex DNA-PK; the interaction phosphorylates DTNBP1 in vitro. Interacts directly in this complex with XRCC5 and XRCC6. Interacts with XPO1; the interaction exports DTNBP1 out of the nucleus. Component of the biogenesis of lysosome-related organelles complex 1 (BLOC-1) composed of BLOC1S1, BLOC1S2, BLOC1S3, BLOC1S4, BLOC1S5, BLOC1S6, DTNBP1/BLOC1S7 and SNAPIN/BLOC1S8. The BLOC-1 complex associates with the AP-3 protein complex and membrane protein cargos. This BLOC-1 complex also associates with the BLOC-2 complex in endosomes. Binds to DTNA and DTNB but may not be a physiological binding partner. Interacts (via its coiled coil domain) with KXD1. Interacts with AP3B2, BLOC1S5, BLOC1S6, CMYA5, PI4K2, RNF151 and SNAPIN/BLOC1S8. Interacts with XPO1; the interaction exports DTNBP1 out of the nucleus. In terms of processing, ubiquitinated by TRIM32. Ubiquitination leads to DTNBP1 degradation. As to expression, detected in brain, in hippocampus and dentate gyrus neurons. Detected at axon bundles and axon terminals, notably in the cerebellum and hippocampus. Detected in neuropil in hippocampus, lateral septum, basal ganglia and substantia nigra. Highly expressed in pyramidal cells of hippocampus CA2 and CA3. Detected at the heart and skeletal muscle sarcolemma (at protein level). Ubiquitously expressed. The highest expression is observed in testis, liver, kidney, brain, heart and lung. Expressed at lower levels in stomach and small intestine.

It localises to the cytoplasm. The protein resides in the cytoplasmic vesicle membrane. Its subcellular location is the endosome membrane. It is found in the melanosome membrane. The protein localises to the postsynaptic density. It localises to the endoplasmic reticulum. The protein resides in the nucleus. Its subcellular location is the cytoplasmic vesicle. It is found in the secretory vesicle. The protein localises to the synaptic vesicle membrane. It localises to the postsynaptic cell membrane. Its function is as follows. Component of the BLOC-1 complex, a complex that is required for normal biogenesis of lysosome-related organelles (LRO), such as platelet dense granules and melanosomes. In concert with the AP-3 complex, the BLOC-1 complex is required to target membrane protein cargos into vesicles assembled at cell bodies for delivery into neurites and nerve terminals. The BLOC-1 complex, in association with SNARE proteins, is also proposed to be involved in neurite extension. Associates with the BLOC-2 complex to facilitate the transport of TYRP1 independent of AP-3 function. Plays a role in synaptic vesicle trafficking and in neurotransmitter release. Plays a role in the regulation of cell surface exposure of DRD2. May play a role in actin cytoskeleton reorganization and neurite outgrowth. May modulate MAPK8 phosphorylation. Appears to promote neuronal transmission and viability through regulating the expression of SNAP25 and SYN1, modulating PI3-kinase-Akt signaling and influencing glutamatergic release. Regulates the expression of SYN1 through binding to its promoter. Modulates prefrontal cortical activity via the dopamine/D2 pathway. This is Dysbindin (Dtnbp1) from Mus musculus (Mouse).